A 636-amino-acid polypeptide reads, in one-letter code: uncharacterized protein (636 aa).

2 disordered regions span residues 1-22 (MYNV…NEIG) and 81-107 (SSQT…PQNN). At 1 to 170 (MYNVRGDLNR…YFVGGEGLMQ (170 aa)) the chain is on the cytoplasmic side. Residues 171 to 191 (LLFLLFLAAGTGMLFIGLPIL) traverse the membrane as a helical; Signal-anchor for type II membrane protein segment. At 192–636 (TYTGHNSLAS…RPKNSLMDGC (445 aa)) the chain is on the lumenal side. Residues 218–587 (LRYGSLIDPD…YVRIYQDSSD (370 aa)) form the GH16 domain. N-linked (GlcNAc...) asparagine glycans are attached at residues Asn291, Asn378, Asn429, Asn464, Asn489, and Asn616.

Belongs to the SKN1/KRE6 family.

The protein localises to the endoplasmic reticulum membrane. In terms of biological role, required for synthesis of the major beta-glucans of the yeast cell wall. This is an uncharacterized protein from Schizosaccharomyces pombe (strain 972 / ATCC 24843) (Fission yeast).